The following is a 119-amino-acid chain: Large ribosomal subunit protein uL22 (119 aa).

This sequence belongs to the universal ribosomal protein uL22 family. Part of the 50S ribosomal subunit.

Functionally, this protein binds specifically to 23S rRNA; its binding is stimulated by other ribosomal proteins, e.g. L4, L17, and L20. It is important during the early stages of 50S assembly. It makes multiple contacts with different domains of the 23S rRNA in the assembled 50S subunit and ribosome. Its function is as follows. The globular domain of the protein is located near the polypeptide exit tunnel on the outside of the subunit, while an extended beta-hairpin is found that lines the wall of the exit tunnel in the center of the 70S ribosome. This chain is Large ribosomal subunit protein uL22, found in Rickettsia typhi (strain ATCC VR-144 / Wilmington).